A 262-amino-acid polypeptide reads, in one-letter code: Phenylalanine-4-hydroxylase (262 aa).

Residues histidine 121, histidine 126, and glutamate 166 each contribute to the Fe cation site.

The protein belongs to the biopterin-dependent aromatic amino acid hydroxylase family. As to quaternary structure, monomer. Fe(2+) serves as cofactor.

The enzyme catalyses (6R)-L-erythro-5,6,7,8-tetrahydrobiopterin + L-phenylalanine + O2 = (4aS,6R)-4a-hydroxy-L-erythro-5,6,7,8-tetrahydrobiopterin + L-tyrosine. The protein operates within amino-acid degradation; L-phenylalanine degradation; acetoacetate and fumarate from L-phenylalanine: step 1/6. The chain is Phenylalanine-4-hydroxylase (phhA) from Pseudomonas aeruginosa (strain ATCC 15692 / DSM 22644 / CIP 104116 / JCM 14847 / LMG 12228 / 1C / PRS 101 / PAO1).